A 910-amino-acid polypeptide reads, in one-letter code: MSFKKQTKTPTSWFPGLKKERDLSHHKERYCTQYDVIKVNAYGKRQQRTLAVSSLGVSNLNGQSCQWFVRNSDVYSIEQDPTDSHKFSLTFLHRYHFEAETPEQAKSIISEFKRLGVGSPSGGGGGGSGVSSNGSNSTATSPNTSPIRLYVSDPSNQPTSSSPPPQPPLSESVGVHRSSPMLSSSRMISQLSQSTSENNISSPTYHPQGLSGSSTSSSSASGGGGNNNNANNSTPPNLIASSASNSSLYSSSINSSGIINSSNNNSSISFNNNNNNNNSNLTTTTTTTSTFKTPTLPISQASKFNNESESMGLSPLTPNSNSQTALMQHINAMPNTPNSNSTEGSRVWKIRAEELKKQFLLKKSSKSTQTVATTTPTPITKADIKIVLDDNKDDKNKDNNIGSGGSGNSSSKINKEKDNPYINQPSSLPSNNNSNNNNITKSNSTTTSQTNDKKDVCSSTINFDNLEVSSSSDRDLSSSKSLNKKNKQSIKKLTIDDFELLKVLGVGSFGRVYLVRRKDTGKFYAMKVLNKKDMLKKKQIAHTNTEKMVLSTMDHPFIVRLHFAFQNEDFLFMCMDYVPGGELFHHLQKAGKFPEELAKFYIAEVICSLHYLHSNNIIYRDIKPENILLDEEGHIKLTDFGLSKSGITSVVGSKNGGEGGFATTFCGTPEYLAPEIITGAGHGKAADWWSVGILLFEMLTGRSPFLASNRNDMYKSMIQGNLRMPMFLSSDAQDLLEKLLVPDPNKRLGSTQGFEEISSHPFFELIPWRMLESKMITPPFKPTIKEISLPNSNSNSNNNSQQPTNNNLTLSCDPELNAKINFQRRKSSAASVYNLDSPFKNFSWNKEEEDGIMGERESIGSISSNNSISSSPTSSSPINNNNSGGSNTAGGHRILTRKSTIGKNLRKGSV.

Gly residues predominate over residues 119 to 129 (SPSGGGGGGSG). Disordered regions lie at residues 119 to 239 (SPSG…PNLI), 270 to 295 (FNNN…KTPT), and 391 to 454 (NKDD…NDKK). Low complexity-rich tracts occupy residues 130-160 (VSSN…QPTS), 169-196 (LSES…QSTS), 209-220 (GLSGSSTSSSSA), 227-239 (NNNA…PNLI), 270-290 (FNNN…TTST), and 422-450 (INQP…TSQT). A Protein kinase domain is found at 498–763 (FELLKVLGVG…FEEISSHPFF (266 aa)). ATP-binding positions include 504 to 512 (LGVGSFGRV) and K527. The active-site Proton acceptor is D621. T664 is modified (phosphothreonine; by autocatalysis). The region spanning 764–854 (ELIPWRMLES…NKEEEDGIMG (91 aa)) is the AGC-kinase C-terminal domain. Disordered stretches follow at residues 786 to 812 (EISL…TLSC) and 859 to 910 (IGSI…KGSV). Composition is skewed to low complexity over residues 788-809 (SLPN…NNLT) and 859-886 (IGSI…SGGS).

This sequence belongs to the protein kinase superfamily. AGC Ser/Thr protein kinase family.

It catalyses the reaction L-seryl-[protein] + ATP = O-phospho-L-seryl-[protein] + ADP + H(+). The enzyme catalyses L-threonyl-[protein] + ATP = O-phospho-L-threonyl-[protein] + ADP + H(+). The sequence is that of Protein kinase 3 (pkgC) from Dictyostelium discoideum (Social amoeba).